A 322-amino-acid chain; its full sequence is 2-methylene-furan-3-one reductase (322 aa).

NADP(+) is bound by residues Lys-59, 174–175 (GV), 197–200 (STKK), Tyr-215, Ile-253, 264–266 (FVL), 311–312 (RA), and 311–322 (RATGKVVVYPIP). Residue Lys-59 participates in substrate binding.

The protein belongs to the zinc-containing alcohol dehydrogenase family. Quinone oxidoreductase subfamily. As to quaternary structure, monomer. Post-translationally, the N-terminus is blocked.

It carries out the reaction 4-hydroxy-2,5-dimethyl-furan-3(2H)-one + NADP(+) = 4-hydroxy-5-methyl-2-methylenefuran-3(2H)-one + NADPH + H(+). Enone oxidoreductase involved in the biosynthesis of 4-hydroxy-2,5-dimethyl-3(2H)-furanone (HDMF or furaneol), the key flavor compound in strawberries. Can use both NADH and NADPH as the electron donor. This chain is 2-methylene-furan-3-one reductase (EO), found in Fragaria ananassa (Strawberry).